Consider the following 382-residue polypeptide: Galactokinase (382 aa).

Position 34–37 (34–37 (EHTD)) interacts with substrate. 124–130 (GAGLSSS) provides a ligand contact to ATP. Mg(2+) contacts are provided by Ser-130 and Glu-162. Asp-174 acts as the Proton acceptor in catalysis. Residue Tyr-223 participates in substrate binding.

It belongs to the GHMP kinase family. GalK subfamily.

It localises to the cytoplasm. It carries out the reaction alpha-D-galactose + ATP = alpha-D-galactose 1-phosphate + ADP + H(+). Its pathway is carbohydrate metabolism; galactose metabolism. Its function is as follows. Catalyzes the transfer of the gamma-phosphate of ATP to D-galactose to form alpha-D-galactose-1-phosphate (Gal-1-P). The protein is Galactokinase of Erwinia tasmaniensis (strain DSM 17950 / CFBP 7177 / CIP 109463 / NCPPB 4357 / Et1/99).